A 205-amino-acid chain; its full sequence is Small ribosomal subunit protein uS4 (205 aa).

The tract at residues 18 to 46 (NIWGRPKSPVNSRAYGPGQHGQRRKSKVS) is disordered. In terms of domain architecture, S4 RNA-binding spans 94-155 (SRLDAVVYRA…RSRNMALVLE (62 aa)).

This sequence belongs to the universal ribosomal protein uS4 family. In terms of assembly, part of the 30S ribosomal subunit. Contacts protein S5. The interaction surface between S4 and S5 is involved in control of translational fidelity.

In terms of biological role, one of the primary rRNA binding proteins, it binds directly to 16S rRNA where it nucleates assembly of the body of the 30S subunit. With S5 and S12 plays an important role in translational accuracy. The protein is Small ribosomal subunit protein uS4 of Phenylobacterium zucineum (strain HLK1).